We begin with the raw amino-acid sequence, 1210 residues long: V-type proton ATPase 116 kDa subunit a 4 (1210 aa).

At 1-715 the chain is on the cytoplasmic side; it reads MSSFSNVGFV…YTIITFPFLF (715 aa). Residues 259–271 show a composition bias toward low complexity; the sequence is SSKISFTSSSPSP. The disordered stretch occupies residues 259–292; the sequence is SSKISFTSSSPSPQRNPKNEAQKNSSSKREETSM. A compositionally biased stretch (basic and acidic residues) spans 275–291; that stretch reads PKNEAQKNSSSKREETS. Residues 339-405 are a coiled coil; the sequence is FVKQMRRCEE…EREFLDLNNN (67 aa). The chain crosses the membrane as a helical span at residues 716-736; sequence AVMFGDAAHGAILLLAALFFI. The Extracellular portion of the chain corresponds to 737 to 760; the sequence is RNERKIESKKIRDEIFNTFYGGRY. A helical transmembrane segment spans residues 761-781; it reads IMMLMGIFSIYTGFLYNDAFA. Residues 782–855 are Cytoplasmic-facing; the sequence is KSFNVFGSGW…SFLNSMKMKA (74 aa). Residues 856–876 form a helical membrane-spanning segment; it reads SVIIGITQMTFGVFLSVLNHI. The Extracellular segment spans residues 877–892; sequence HFKSYIDIISNFIPQV. The chain crosses the membrane as a helical span at residues 893-913; sequence IFLSCIFIYLCIQIIVKWIFF. Residues 914-976 are Cytoplasmic-facing; that stretch reads SVNAENVFGF…WYPNQRLVET (63 aa). The helical transmembrane segment at 977–997 threads the bilayer; it reads ILISISLACIPIMLFGKPLWV. The Extracellular portion of the chain corresponds to 998–1127; that stretch reads RFVTSKRHKL…NETIAMCLKP (130 aa). 3 N-linked (GlcNAc...) asparagine glycosylation sites follow: asparagine 1010, asparagine 1019, and asparagine 1118. The chain crosses the membrane as a helical span at residues 1128-1148; the sequence is VVACVAFFIFASLSLSILIMM. Residues 1149–1210 are Cytoplasmic-facing; the sequence is EGLSAFLHAL…DISSGQHLHI (62 aa).

This sequence belongs to the V-ATPase 116 kDa subunit family. V-ATPase is a heteromultimeric enzyme made up of two complexes: the ATP-hydrolytic V1 complex and the proton translocation V0 complex. The V1 complex consists of three catalytic AB heterodimers that form a heterohexamer, three peripheral stalks each consisting of EG heterodimers, one central rotor including subunits D and F, and the regulatory subunits C and H. The proton translocation complex V0 consists of the proton transport subunit a, a ring of proteolipid subunits c9c'', rotary subunit d, subunits e and f, and the accessory subunits vah-19/Ac45 and vah-20/PRR. Expressed in uterus.

It is found in the membrane. Its function is as follows. Subunit of the V0 complex of vacuolar(H+)-ATPase (V-ATPase), a multisubunit enzyme composed of a peripheral complex (V1) that hydrolyzes ATP and a membrane integral complex (V0) that translocates protons. V-ATPase is responsible for acidifying and maintaining the pH of intracellular compartments and in some cell types, is targeted to the plasma membrane, where it is responsible for acidifying the extracellular environment. This is V-type proton ATPase 116 kDa subunit a 4 from Caenorhabditis elegans.